Reading from the N-terminus, the 182-residue chain is MINSMQFLYLVASYLFGNILTAYIVTKWRHNVDIRDEGSGNPGARNMGRVYGKGYFVATFLGDAIKGAIVVSIAKYLFEDSTFLMLTLLAVIMGHIYPILFKGKGGKGISTFIGGLIAFDYLIALTLVTVFIIFYLIFKGFTKPGLITIACLPLCMILYSYSIVTTILSVLIIVLILYVNRE.

5 helical membrane passes run 5–25, 54–74, 81–101, 117–137, and 157–177; these read MQFLYLVASYLFGNILTAYIV, GYFVATFLGDAIKGAIVVSIA, STFLMLTLLAVIMGHIYPILF, IAFDYLIALTLVTVFIIFYLI, and ILYSYSIVTTILSVLIIVLIL.

The protein belongs to the PlsY family. Probably interacts with PlsX.

The protein localises to the cell membrane. The enzyme catalyses an acyl phosphate + sn-glycerol 3-phosphate = a 1-acyl-sn-glycero-3-phosphate + phosphate. Its pathway is lipid metabolism; phospholipid metabolism. In terms of biological role, catalyzes the transfer of an acyl group from acyl-phosphate (acyl-PO(4)) to glycerol-3-phosphate (G3P) to form lysophosphatidic acid (LPA). This enzyme utilizes acyl-phosphate as fatty acyl donor, but not acyl-CoA or acyl-ACP. The sequence is that of Glycerol-3-phosphate acyltransferase 1 from Bacillus thuringiensis subsp. konkukian (strain 97-27).